The following is a 122-amino-acid chain: Large ribosomal subunit protein uL14 (122 aa).

The protein belongs to the universal ribosomal protein uL14 family. In terms of assembly, part of the 50S ribosomal subunit. Forms a cluster with proteins L3 and L19. In the 70S ribosome, L14 and L19 interact and together make contacts with the 16S rRNA in bridges B5 and B8.

Functionally, binds to 23S rRNA. Forms part of two intersubunit bridges in the 70S ribosome. In Christiangramia forsetii (strain DSM 17595 / CGMCC 1.15422 / KT0803) (Gramella forsetii), this protein is Large ribosomal subunit protein uL14.